The primary structure comprises 198 residues: Sorcin (198 aa).

EF-hand domains are found at residues 45 to 64, 70 to 98, 100 to 135, and 151 to 169; these read QDGQ…SGIA, FNLE…FKEL, AVLN…MGFR, and SGKI…LRAL. The Ca(2+) site is built by Asp83, Asp85, Ser87, Thr89, Glu94, Asp113, Asp115, Ser117, Thr119, and Glu124. Ser178 is modified (phosphoserine).

Homodimer. Interacts with GCA, RYR2 and ANXA7. As to expression, detected in cardiac myocytes.

The protein resides in the cytoplasm. It is found in the sarcoplasmic reticulum membrane. Its function is as follows. Calcium-binding protein that modulates excitation-contraction coupling in the heart. Contributes to calcium homeostasis in the heart sarcoplasmic reticulum. Modulates the activity of RYR2 calcium channels. The sequence is that of Sorcin (Sri) from Mus musculus (Mouse).